An 89-amino-acid chain; its full sequence is Gamma-bungarotoxin (89 aa).

The signal sequence occupies residues M1–T21. 5 disulfide bridges follow: C24-C45, C27-C32, C38-C66, C70-C81, and C82-C87. Positions R54–D56 match the Cell attachment site motif.

Belongs to the three-finger toxin family. Ancestral subfamily. Orphan group V sub-subfamily. In terms of tissue distribution, expressed by the venom gland.

It is found in the secreted. Functionally, exhibits M2 muscarinic acetylcholine receptor (CHRM2)-blocking activity, but has a weak binding activity toward nicotinic AChR. Moreover, it inhibits collagen-induced platelet aggregation. The polypeptide is Gamma-bungarotoxin (Bungarus multicinctus (Many-banded krait)).